We begin with the raw amino-acid sequence, 547 residues long: Phosphomethylpyrimidine synthase (547 aa).

Residues Asn146, Met175, Tyr204, His240, 260–262 (SRG), 301–304 (DGLR), and Glu340 each bind substrate. His344 provides a ligand contact to Zn(2+). Substrate is bound at residue Tyr367. Residue His408 coordinates Zn(2+). The [4Fe-4S] cluster site is built by Cys488, Cys491, and Cys496.

Belongs to the ThiC family. [4Fe-4S] cluster serves as cofactor.

It catalyses the reaction 5-amino-1-(5-phospho-beta-D-ribosyl)imidazole + S-adenosyl-L-methionine = 4-amino-2-methyl-5-(phosphooxymethyl)pyrimidine + CO + 5'-deoxyadenosine + formate + L-methionine + 3 H(+). Its pathway is cofactor biosynthesis; thiamine diphosphate biosynthesis. Functionally, catalyzes the synthesis of the hydroxymethylpyrimidine phosphate (HMP-P) moiety of thiamine from aminoimidazole ribotide (AIR) in a radical S-adenosyl-L-methionine (SAM)-dependent reaction. The sequence is that of Phosphomethylpyrimidine synthase from Mycobacterium bovis (strain ATCC BAA-935 / AF2122/97).